The following is a 280-amino-acid chain: Chaperone protein LppX (280 aa).

A signal peptide spans 1–18; sequence MRKWLIFLLIAAVAGLSA. Cys-19 is lipidated: N-palmitoyl cysteine. Cys-19 is lipidated: S-diacylglycerol cysteine.

Its subcellular location is the cell membrane. Functionally, is required for the expression of the adjacently encoded xylanase Xyn11E in an active form. LppX seems to act as a specific chaperone necessary for the correct folding of the xylanase during secretion across the cytoplasmic membrane. The chain is Chaperone protein LppX from Paenibacillus barcinonensis.